The following is a 484-amino-acid chain: Glycogen synthase (484 aa).

Residue Lys20 participates in ADP-alpha-D-glucose binding.

This sequence belongs to the glycosyltransferase 1 family. Bacterial/plant glycogen synthase subfamily.

The enzyme catalyses [(1-&gt;4)-alpha-D-glucosyl](n) + ADP-alpha-D-glucose = [(1-&gt;4)-alpha-D-glucosyl](n+1) + ADP + H(+). Its pathway is glycan biosynthesis; glycogen biosynthesis. Synthesizes alpha-1,4-glucan chains using ADP-glucose. This Vibrio atlanticus (strain LGP32) (Vibrio splendidus (strain Mel32)) protein is Glycogen synthase.